Here is a 335-residue protein sequence, read N- to C-terminus: Biotin synthase (335 aa).

Residues 39–267 (TKIQVCKLIS…ASDVRLSAGR (229 aa)) form the Radical SAM core domain. The [4Fe-4S] cluster site is built by cysteine 54, cysteine 58, and cysteine 61. The [2Fe-2S] cluster site is built by cysteine 98, cysteine 130, cysteine 190, and arginine 262.

This sequence belongs to the radical SAM superfamily. Biotin synthase family. Homodimer. [4Fe-4S] cluster serves as cofactor. It depends on [2Fe-2S] cluster as a cofactor.

It catalyses the reaction (4R,5S)-dethiobiotin + (sulfur carrier)-SH + 2 reduced [2Fe-2S]-[ferredoxin] + 2 S-adenosyl-L-methionine = (sulfur carrier)-H + biotin + 2 5'-deoxyadenosine + 2 L-methionine + 2 oxidized [2Fe-2S]-[ferredoxin]. It participates in cofactor biosynthesis; biotin biosynthesis; biotin from 7,8-diaminononanoate: step 2/2. Its function is as follows. Catalyzes the conversion of dethiobiotin (DTB) to biotin by the insertion of a sulfur atom into dethiobiotin via a radical-based mechanism. In Nostoc punctiforme (strain ATCC 29133 / PCC 73102), this protein is Biotin synthase.